The sequence spans 729 residues: Cellulose synthase-like protein E1 (729 aa).

Helical transmembrane passes span 29–49 (VIAYRFFSASVFVCICLIWFY) and 64–84 (LIWFVMFIVEIWFGLYWVVTQ). Active-site residues include aspartate 152 and aspartate 443. 5 helical membrane-spanning segments follow: residues 526–546 (LPVLIYSVLTSLCLFKGIPLF), 553–573 (WFIPFGYVTVAATAYSLAEFL), 644–664 (MFLVLGTLGMLNLFCFAAAVA), 680–700 (QFVITGVLVVINWPLYKGMLL), and 709–729 (MSVTVKSVVLALSACTCLAFL).

Belongs to the glycosyltransferase 2 family. Plant cellulose synthase-like E subfamily.

Its subcellular location is the golgi apparatus membrane. Functionally, thought to be a Golgi-localized beta-glycan synthase that polymerize the backbones of noncellulosic polysaccharides (hemicelluloses) of plant cell wall. The sequence is that of Cellulose synthase-like protein E1 (CSLE1) from Arabidopsis thaliana (Mouse-ear cress).